Here is a 473-residue protein sequence, read N- to C-terminus: Trigger factor (473 aa).

The PPIase FKBP-type domain occupies 171–256 (GDRVTIDFVG…VTKIQAAGEA (86 aa)). A disordered region spans residues 439–473 (KEALFADEDGDDTTGGKPADKAEAKDESKTEAKAD). Residues 456 to 473 (PADKAEAKDESKTEAKAD) are compositionally biased toward basic and acidic residues.

It belongs to the FKBP-type PPIase family. Tig subfamily.

It is found in the cytoplasm. The catalysed reaction is [protein]-peptidylproline (omega=180) = [protein]-peptidylproline (omega=0). Its function is as follows. Involved in protein export. Acts as a chaperone by maintaining the newly synthesized protein in an open conformation. Functions as a peptidyl-prolyl cis-trans isomerase. The chain is Trigger factor from Methylobacterium radiotolerans (strain ATCC 27329 / DSM 1819 / JCM 2831 / NBRC 15690 / NCIMB 10815 / 0-1).